Consider the following 125-residue polypeptide: Protein 5 (125 aa).

This Hordeum vulgare (Barley) protein is Protein 5 (5).